A 207-amino-acid chain; its full sequence is Cytochrome c biogenesis ATP-binding export protein CcmA (207 aa).

The region spanning 4-207 (LEVRELLCER…RISLTQTRAV (204 aa)) is the ABC transporter domain. Residue 36–43 (GSNGAGKT) coordinates ATP.

The protein belongs to the ABC transporter superfamily. CcmA exporter (TC 3.A.1.107) family. The complex is composed of two ATP-binding proteins (CcmA) and two transmembrane proteins (CcmB).

Its subcellular location is the cell inner membrane. The enzyme catalyses heme b(in) + ATP + H2O = heme b(out) + ADP + phosphate + H(+). Its function is as follows. Part of the ABC transporter complex CcmAB involved in the biogenesis of c-type cytochromes; once thought to export heme, this seems not to be the case, but its exact role is uncertain. Responsible for energy coupling to the transport system. The sequence is that of Cytochrome c biogenesis ATP-binding export protein CcmA from Shigella dysenteriae serotype 1 (strain Sd197).